The primary structure comprises 67 residues: Small ribosomal subunit protein eS17 (67 aa).

Belongs to the eukaryotic ribosomal protein eS17 family.

The polypeptide is Small ribosomal subunit protein eS17 (Thermococcus sibiricus (strain DSM 12597 / MM 739)).